The sequence spans 276 residues: MAKPYDPKDFYYRKAKKEGLRARSAFKIDEILRRHRLLRKGQAVLDLGAAPGGFLQILADEVGETGVAVGVDLEPVRRLGKPWVKTAIVDLLSPGALDQIRTLHAGPFQLVTSDMAPKTIGVKITDEARSLELVRMALDVAEKTLAPGGAFVAKVFMGGEFPVLKKELQARFDEVHVIRPEAVRESSYEVYVLGKGLRRAAARAAPTANATPTPTSTSTSTPTSTSTPTSTSTSTPAPTLTQTQTQTPKKPARRAPAKASTAGKAKAKTGASRRTR.

Residues glycine 52, phenylalanine 54, aspartate 72, aspartate 90, and aspartate 114 each contribute to the S-adenosyl-L-methionine site. Lysine 154 serves as the catalytic Proton acceptor. Residues 203–249 (RAAPTANATPTPTSTSTSTPTSTSTPTSTSTSTPAPTLTQTQTQTPK) are compositionally biased toward low complexity. A disordered region spans residues 203-276 (RAAPTANATP…AKTGASRRTR (74 aa)). The span at 265–276 (AKAKTGASRRTR) shows a compositional bias: basic residues.

The protein belongs to the class I-like SAM-binding methyltransferase superfamily. RNA methyltransferase RlmE family.

It is found in the cytoplasm. The catalysed reaction is uridine(2552) in 23S rRNA + S-adenosyl-L-methionine = 2'-O-methyluridine(2552) in 23S rRNA + S-adenosyl-L-homocysteine + H(+). In terms of biological role, specifically methylates the uridine in position 2552 of 23S rRNA at the 2'-O position of the ribose in the fully assembled 50S ribosomal subunit. The protein is Ribosomal RNA large subunit methyltransferase E of Anaeromyxobacter sp. (strain Fw109-5).